Consider the following 396-residue polypeptide: Flavohemoprotein (396 aa).

Residues 1-136 enclose the Globin domain; sequence MLDAQTIATV…LANVFINREA (136 aa). His85 is a binding site for heme b. Active-site charge relay system residues include Tyr95 and Glu135. Positions 147–396 are reductase; it reads GGWEGTRDFR…YECFGPHKVL (250 aa). The FAD-binding FR-type domain maps to 150-255; sequence EGTRDFRIVA…VAPAGDFFMA (106 aa). FAD contacts are provided by residues Tyr188 and 204–207; that span reads RQYS. Residue 268 to 273 participates in NADP(+) binding; it reads GVGQTP. 389-392 is a binding site for FAD; it reads CFGP.

Belongs to the globin family. Two-domain flavohemoproteins subfamily. The protein in the C-terminal section; belongs to the flavoprotein pyridine nucleotide cytochrome reductase family. Heme b serves as cofactor. Requires FAD as cofactor.

It catalyses the reaction 2 nitric oxide + NADPH + 2 O2 = 2 nitrate + NADP(+) + H(+). The enzyme catalyses 2 nitric oxide + NADH + 2 O2 = 2 nitrate + NAD(+) + H(+). In terms of biological role, is involved in NO detoxification in an aerobic process, termed nitric oxide dioxygenase (NOD) reaction that utilizes O(2) and NAD(P)H to convert NO to nitrate, which protects the bacterium from various noxious nitrogen compounds. Therefore, plays a central role in the inducible response to nitrosative stress. The sequence is that of Flavohemoprotein from Shigella flexneri.